A 152-amino-acid polypeptide reads, in one-letter code: Acidic phospholipase A2 homolog taipoxin gamma chain (152 aa).

A signal peptide spans 1 to 19 (MHPAHLLVLLAVCVSLLGS). Cystine bridges form between Cys-38/Cys-104, Cys-42/Cys-46, Cys-54/Cys-151, Cys-56/Cys-72, Cys-71/Cys-132, Cys-78/Cys-125, Cys-88/Cys-118, and Cys-111/Cys-123. Asn-97 carries N-linked (GlcNAc...) asparagine glycosylation.

The protein belongs to the phospholipase A2 family. Group I subfamily. D49 sub-subfamily. Heterotrimer of alpha, beta, and gamma chains; non-covalently linked. In terms of processing, contains 0.9% fucose, 2.2% mannose, 4.2% N-acetyl-D-glucosamine, 3.5% galactose, and 3.8% N-acetyl-neuraminic acid (sialic acid). Expressed by the venom gland.

The protein resides in the secreted. In terms of biological role, heterotrimer: Snake venom phospholipase A2 (PLA2) heterotrimer that acts as a potent presynaptic neurotoxin by blocking synaptic transmission and synaptic vesicle recycling. May act by binding in a calcium-dependent fashion to neurotonal pentraxin-1 (NPTX1) and neurotonal pentraxin-2 (NPTX2), but not to neuronal pentraxin receptor (NPTXR). Also binds to taipoxin-associated calcium binding protein 49 (RCN2), a protein localized in the lumen of endoplasmic reticulum. Monomer (gamma chain): Snake venom phospholipase A2 homolog that is neither toxic nor enzymatically active. Does not bind calcium. The sequence is that of Acidic phospholipase A2 homolog taipoxin gamma chain from Oxyuranus scutellatus scutellatus (Australian taipan).